The sequence spans 277 residues: Large ribosomal subunit protein uL2 (277 aa).

The interval 219-277 is disordered; sequence TVRGSVMNPNDHPHGGGEGKAPVGRKAPSTPWGKPALGLKTRNKKAKSDKLIVRRRNEK. The span at 264 to 277 shows a compositional bias: basic and acidic residues; that stretch reads AKSDKLIVRRRNEK.

It belongs to the universal ribosomal protein uL2 family. As to quaternary structure, part of the 50S ribosomal subunit. Forms a bridge to the 30S subunit in the 70S ribosome.

One of the primary rRNA binding proteins. Required for association of the 30S and 50S subunits to form the 70S ribosome, for tRNA binding and peptide bond formation. It has been suggested to have peptidyltransferase activity; this is somewhat controversial. Makes several contacts with the 16S rRNA in the 70S ribosome. This Streptococcus sanguinis (strain SK36) protein is Large ribosomal subunit protein uL2.